The chain runs to 2303 residues: Adenomatous polyposis coli protein 2 (2303 aa).

The stretch at 8–59 forms a coiled coil; it reads YEQLVRQVEALKAENSHLRQELRDNSSHLSKLETETSGMKEVLKHLQGKLEQ. Disordered stretches follow at residues 94-120 and 247-270; these read PTLGPEPAARTPEGSPVHGSGPSKDSF and VPVDEDPETEVPTHPEDGTPQPGN. ARM repeat units lie at residues 302-341, 479-518, 522-562, 566-609, 615-654, and 657-696; these read PESCVAMRRSGCLPLLLQILHGTEAAAGGRAGAPGAPGAK, ANKATLCARRGCMEAIVAQLASDSEELHQVVSSILRNLSW, INSK…NLSA, ENKA…NVSS, EDYRQVLRDHNCLQTLLQHLTSHSLTIVSNACGTLWNLSA, and ARDQELLWDLGAVGMLRNLVHSKHKMIAMGSAAALRNLLA. 2 disordered regions span residues 744 to 764 and 816 to 835; these read KQGPPAAEAATKKPLPPLRHL and LARTPPTRRGGKEAEKDTSG. Residues 825 to 834 show a composition bias toward basic and acidic residues; the sequence is GGKEAEKDTS. A coiled-coil region spans residues 840–864; sequence AAKAKAKLALAVARIDQLVEDISAL. Disordered regions lie at residues 867–908, 953–986, 1069–1152, and 1173–1228; these read SSDD…AGSR, RREDPRCGQPRPSRLDLDLPGCQAEPPAREATSA, RCSS…ENYV, and SPSI…EATQ. The segment covering 869-878 has biased composition (low complexity); the sequence is DDSFSLSSGD. Repeat unit 1 spans residues 1058 to 1077; the sequence is LAAQEGPLSLSRCSSLSSLS. Residues 1058 to 1587 form a 5 X 20 AA approximate repeat of F-X-V-E-X-T-P-X-C-F-S-R-X-S-S-L-S-S-L-S region; sequence LAAQEGPLSL…SLSSSASSLS (530 aa). Positions 1058-1587 are interaction with CTNNB1; it reads LAAQEGPLSL…SLSSSASSLS (530 aa). A compositionally biased stretch (low complexity) spans 1069-1084; the sequence is RCSSLSSLSSAGRPGP. Residues 1088 to 1101 show a composition bias toward acidic residues; sequence GDLDDSDSSLEGLE. Residues 1143–1152 show a composition bias toward polar residues; it reads TPSSSSENYV. Repeat 2 spans residues 1150–1169; sequence NYVQETPLVLSRCSSVSSLG. Low complexity predominate over residues 1173–1186; that stretch reads SPSIASSIPSEPCS. A compositionally biased stretch (polar residues) spans 1202–1212; the sequence is PGQTMPPSRSK. Repeat unit 3 spans residues 1263–1282; the sequence is FTVEKPDENFSCASSLSALA. Disordered stretches follow at residues 1307 to 1335, 1382 to 1497, 1510 to 1684, 1724 to 2031, and 2046 to 2232; these read GAGGAGLHFAGHRRREEGPAPTGSRPRGA, PAQE…QSLC, YGND…LDSV, LSVG…RGRP, and LRAA…DVDG. The segment covering 1390–1410 has biased composition (polar residues); that stretch reads TDSAEGTPVNFSSAASLSDET. Residues 1391–1410 form repeat 4; it reads DSAEGTPVNFSSAASLSDET. Composition is skewed to basic and acidic residues over residues 1477–1489 and 1537–1548; these read ADKDGSKPGRTRG and FTRERPQGRKEA. Repeat 5 spans residues 1568–1587; the sequence is LIADETPPCYSLSSSASSLS. The span at 1578–1589 shows a compositional bias: low complexity; the sequence is SLSSSASSLSEP. Residues Ser-1585 and Ser-1587 each carry the phosphoserine modification. Residues 1638-1654 show a composition bias toward basic residues; sequence PRRRPPVSGLRRRKPRA. 2 stretches are compositionally biased toward basic and acidic residues: residues 1655 to 1671 and 1739 to 1755; these read TRLDERPAEGSRERGEE and RQAEGEMGSARRPEKRG. Positions 1819-1830 are enriched in low complexity; the sequence is APPCLAQPAAPA. Positions 1821–1900 are required for localization to microtubules and function in microtubule stabilization; the sequence is PCLAQPAAPA…PPVTQAAGAL (80 aa). The segment covering 1851-1860 has biased composition (polar residues); it reads ELATLSQPPR. Low complexity-rich tracts occupy residues 1868–1886, 1971–1984, 2011–2026, 2049–2062, and 2113–2123; these read LAKTPSSSSSQTSPASQPL, GLVRVASALSSGSE, LSSAESAASAPQGASP, APRQGPAPARQRPP, and GAVPAAPASAD. An interaction with MAPRE1 and MAPRE3 region spans residues 2067–2144; sequence SPGERPARRT…PLPRVAAPGT (78 aa). Positions 2124-2135 are enriched in basic and acidic residues; the sequence is AARRSSDGEPRP. Residues 2200-2209 show a composition bias toward polar residues; sequence KTNSSTSPSL.

Belongs to the adenomatous polyposis coli (APC) family. In terms of assembly, interacts with PSRC1. Interacts with APC. Interacts with CTNNB1. Interacts with MAPRE1 and MAPRE3. Interacts with TP53BP. Interacts possibly with AXIN2. As to expression, widely expressed (at protein level). Specifically expressed in the CNS.

The protein resides in the cytoplasm. The protein localises to the cytoskeleton. It localises to the golgi apparatus. It is found in the perinuclear region. In terms of biological role, stabilizes microtubules and may regulate actin fiber dynamics through the activation of Rho family GTPases. May also function in Wnt signaling by promoting the rapid degradation of CTNNB1. In Homo sapiens (Human), this protein is Adenomatous polyposis coli protein 2.